The sequence spans 218 residues: Runt-related transcription factor 2 (218 aa).

The region spanning 67–195 (RGHKFYLEKK…TVDGPREPRR (129 aa)) is the Runt domain. The segment at 122 to 138 (VMAGNDENYSAELRNAS) is required for interaction with FOXO1. The disordered stretch occupies residues 189–218 (GPREPRRHRQKLDDSKPSLFSDRLSDLGRI). Lys204 participates in a covalent cross-link: Glycyl lysine isopeptide (Lys-Gly) (interchain with G-Cter in SUMO2).

Heterodimer of an alpha and a beta subunit. The alpha subunit binds DNA as a monomer and through the Runt domain. DNA-binding is increased by heterodimerization. Interacts with XRCC6 (Ku70) and XRCC5 (Ku80). Interacts with CCNB1, KAT6A and KAT6B. Interacts with HIVEP3. Interacts with IFI204. Interaction with SATB2; the interaction results in enhanced DNA binding and transactivation by these transcription factors. Binds to HIPK3. Interacts with FOXO1 (via a C-terminal region); the interaction inhibits RUNX2 transcriptional activity towards BGLAP. Interacts with FOXP3. Interacts with TMEM119. Interacts with OLFM2. Interacts with IPO7; the interaction inhibits RUNX2 nuclear translocation in osteoblasts. Post-translationally, phosphorylated; probably by MAP kinases (MAPK). Phosphorylation by HIPK3 is required for the SPEN/MINT and FGF2 transactivation during osteoblastic differentiation.

It is found in the nucleus. The protein resides in the cytoplasm. Functionally, transcription factor involved in osteoblastic differentiation and skeletal morphogenesis. Essential for the maturation of osteoblasts and both intramembranous and endochondral ossification. CBF binds to the core site, 5'-PYGPYGGT-3', of a number of enhancers and promoters, including murine leukemia virus, polyomavirus enhancer, T-cell receptor enhancers, osteocalcin, osteopontin, bone sialoprotein, alpha 1(I) collagen, LCK, IL-3 and GM-CSF promoters. Inhibits KAT6B-dependent transcriptional activation. In osteoblasts, supports transcription activation: synergizes with SPEN/MINT to enhance FGFR2-mediated activation of the osteocalcin FGF-responsive element (OCFRE). The chain is Runt-related transcription factor 2 (Runx2) from Rattus norvegicus (Rat).